Here is a 469-residue protein sequence, read N- to C-terminus: Chromosomal replication initiator protein DnaA (469 aa).

Positions 1 to 71 (MKEFWQTCVS…EALAAEWYQR (71 aa)) are domain I, interacts with DnaA modulators. The segment at 71–131 (RPVQVTFELP…DAANIVYERS (61 aa)) is domain II. The domain III, AAA+ region stretch occupies residues 132–348 (RLNTDLTFEN…GALRKVLAYA (217 aa)). ATP is bound by residues G176, G178, K179, and T180. Positions 349 to 469 (RFHGRDVLTV…LHVLEQTLKG (121 aa)) are domain IV, binds dsDNA.

This sequence belongs to the DnaA family. In terms of assembly, oligomerizes as a right-handed, spiral filament on DNA at oriC.

It localises to the cytoplasm. Plays an essential role in the initiation and regulation of chromosomal replication. ATP-DnaA binds to the origin of replication (oriC) to initiate formation of the DNA replication initiation complex once per cell cycle. Binds the DnaA box (a 9 base pair repeat at the origin) and separates the double-stranded (ds)DNA. Forms a right-handed helical filament on oriC DNA; dsDNA binds to the exterior of the filament while single-stranded (ss)DNA is stabiized in the filament's interior. The ATP-DnaA-oriC complex binds and stabilizes one strand of the AT-rich DNA unwinding element (DUE), permitting loading of DNA polymerase. After initiation quickly degrades to an ADP-DnaA complex that is not apt for DNA replication. Binds acidic phospholipids. The sequence is that of Chromosomal replication initiator protein DnaA from Bordetella parapertussis (strain 12822 / ATCC BAA-587 / NCTC 13253).